A 275-amino-acid chain; its full sequence is NH(3)-dependent NAD(+) synthetase (275 aa).

Residue 50–57 participates in ATP binding; the sequence is GISGGVDS. Residue D56 participates in Mg(2+) binding. R147 is a binding site for deamido-NAD(+). T167 provides a ligand contact to ATP. A Mg(2+)-binding site is contributed by E172. Deamido-NAD(+) is bound by residues K180 and D187. ATP-binding residues include K196 and T218. 267 to 268 lines the deamido-NAD(+) pocket; the sequence is HK.

This sequence belongs to the NAD synthetase family. In terms of assembly, homodimer.

It carries out the reaction deamido-NAD(+) + NH4(+) + ATP = AMP + diphosphate + NAD(+) + H(+). It functions in the pathway cofactor biosynthesis; NAD(+) biosynthesis; NAD(+) from deamido-NAD(+) (ammonia route): step 1/1. In terms of biological role, catalyzes the ATP-dependent amidation of deamido-NAD to form NAD. Uses ammonia as a nitrogen source. The sequence is that of NH(3)-dependent NAD(+) synthetase from Pseudomonas putida (strain ATCC 47054 / DSM 6125 / CFBP 8728 / NCIMB 11950 / KT2440).